The sequence spans 338 residues: Phosphoribosylformylglycinamidine cyclo-ligase (338 aa).

Belongs to the AIR synthase family.

It is found in the cytoplasm. The enzyme catalyses 2-formamido-N(1)-(5-O-phospho-beta-D-ribosyl)acetamidine + ATP = 5-amino-1-(5-phospho-beta-D-ribosyl)imidazole + ADP + phosphate + H(+). It functions in the pathway purine metabolism; IMP biosynthesis via de novo pathway; 5-amino-1-(5-phospho-D-ribosyl)imidazole from N(2)-formyl-N(1)-(5-phospho-D-ribosyl)glycinamide: step 2/2. This is Phosphoribosylformylglycinamidine cyclo-ligase from Thermoplasma acidophilum (strain ATCC 25905 / DSM 1728 / JCM 9062 / NBRC 15155 / AMRC-C165).